The following is an 89-amino-acid chain: Microcin N (89 aa).

The signal sequence occupies residues 1 to 15 (MRELDREELNCVGGA).

This sequence belongs to the class IIa microcin family. Mass spectrometry suggests 3 of the 4 Met residues of the mature peptide are oxidized.

The protein localises to the secreted. In terms of biological role, active against E.coli and Salmonella, but not Listeria or Campylobacter. Channel-forming microcin. Probably neutralized by its immunity protein McnI. The polypeptide is Microcin N (Escherichia coli).